Consider the following 108-residue polypeptide: Peptidyl-prolyl cis-trans isomerase FKBP1A (108 aa).

The PPIase FKBP-type domain maps to 20 to 108 (GQTVVVHYVG…TFDVELLRLE (89 aa)).

Belongs to the FKBP-type PPIase family. FKBP1 subfamily.

The protein resides in the cytoplasm. It catalyses the reaction [protein]-peptidylproline (omega=180) = [protein]-peptidylproline (omega=0). With respect to regulation, inhibited by both FK506 and rapamycin. Its function is as follows. Keeps in an inactive conformation TGFBR1, the TGF-beta type I serine/threonine kinase receptor, preventing TGF-beta receptor activation in absence of ligand. May modulate the RYR1 calcium channel activity. PPIases accelerate the folding of proteins. It catalyzes the cis-trans isomerization of proline imidic peptide bonds in oligopeptides. This Xenopus laevis (African clawed frog) protein is Peptidyl-prolyl cis-trans isomerase FKBP1A (fkbp1a).